A 187-amino-acid chain; its full sequence is Ribosome-recycling factor (187 aa).

This sequence belongs to the RRF family.

Its subcellular location is the cytoplasm. Functionally, responsible for the release of ribosomes from messenger RNA at the termination of protein biosynthesis. May increase the efficiency of translation by recycling ribosomes from one round of translation to another. The protein is Ribosome-recycling factor of Parabacteroides distasonis (strain ATCC 8503 / DSM 20701 / CIP 104284 / JCM 5825 / NCTC 11152).